A 349-amino-acid chain; its full sequence is MAEAIFKALLLVIATTAFATTEAALGQRVPCYFVFGDSVFDNGNNNVLNTSAKVNYSPYGIDFARGPTGRFSNGRNIPDIIAELMRFSDYIPPFTGASPEQAHIGINYASGGGGIREETSQHLGEIISFKKQIKNHRSMIMTAKVPEEKLNKCLYTINIGSNDYLNNYFMPAPYMTNKKFSFDEYADSLIRSYRSYLKSLYVLGARKVAVFGVSKLGCTPRMIASHGGGNGCAAEVNKAVEPFNKNLKALVYEFNRDFADAKFTFVDIFSGQSPFAFFMLGFRVTDKSCCTVKPGEELCATNEPVCPVQRRYVYWDNVHSTEAANMVVAKAAYAGLITSPYSLSWLARL.

The first 23 residues, 1 to 23 (MAEAIFKALLLVIATTAFATTEA), serve as a signal peptide directing secretion. The Nucleophile role is filled by Ser38. An N-linked (GlcNAc...) asparagine glycan is attached at Asn49. Residues Asp316 and His319 contribute to the active site.

Belongs to the 'GDSL' lipolytic enzyme family.

Its subcellular location is the secreted. In Arabidopsis thaliana (Mouse-ear cress), this protein is GDSL esterase/lipase At2g19050.